The sequence spans 177 residues: Ribosome maturation factor RimM (177 aa).

The PRC barrel domain maps to 100–177; that stretch reads EDEYYWSDLV…TVLVAWPSDY (78 aa).

This sequence belongs to the RimM family. In terms of assembly, binds ribosomal protein uS19.

The protein localises to the cytoplasm. An accessory protein needed during the final step in the assembly of 30S ribosomal subunit, possibly for assembly of the head region. Essential for efficient processing of 16S rRNA. May be needed both before and after RbfA during the maturation of 16S rRNA. It has affinity for free ribosomal 30S subunits but not for 70S ribosomes. This is Ribosome maturation factor RimM from Psychrobacter cryohalolentis (strain ATCC BAA-1226 / DSM 17306 / VKM B-2378 / K5).